Consider the following 389-residue polypeptide: Chorismate synthase (389 aa).

Positions 41 and 47 each coordinate NADP(+). FMN contacts are provided by residues 129-131 (RSS), 247-248 (NA), Gly291, 306-310 (KPIST), and Arg332.

It belongs to the chorismate synthase family. In terms of assembly, homotetramer. FMNH2 serves as cofactor.

It carries out the reaction 5-O-(1-carboxyvinyl)-3-phosphoshikimate = chorismate + phosphate. It functions in the pathway metabolic intermediate biosynthesis; chorismate biosynthesis; chorismate from D-erythrose 4-phosphate and phosphoenolpyruvate: step 7/7. Functionally, catalyzes the anti-1,4-elimination of the C-3 phosphate and the C-6 proR hydrogen from 5-enolpyruvylshikimate-3-phosphate (EPSP) to yield chorismate, which is the branch point compound that serves as the starting substrate for the three terminal pathways of aromatic amino acid biosynthesis. This reaction introduces a second double bond into the aromatic ring system. The polypeptide is Chorismate synthase (Rubrobacter xylanophilus (strain DSM 9941 / JCM 11954 / NBRC 16129 / PRD-1)).